The following is a 143-amino-acid chain: Cofilin (143 aa).

Position 4 is a phosphoserine (S4). One can recognise an ADF-H domain in the interval 5 to 137; it reads GVAVADESLT…SYDSVLERVS (133 aa).

This sequence belongs to the actin-binding proteins ADF family. Interacts with actin and AIP1 in a ternary complex. In terms of processing, the N-terminus is blocked.

Its subcellular location is the cytoplasm. It localises to the cytoskeleton. The protein resides in the nucleus matrix. Its function is as follows. Controls reversibly actin polymerization and depolymerization in a pH-sensitive manner. It has the ability to bind G- and F-actin in a 1:1 ratio of cofilin to actin. Binding to F-actin is regulated by tropomyosin. It is the major component of intranuclear and cytoplasmic actin rods. Required for accumulation of actin at the cell division site via depolymerizing actin at the cell ends. In association with myosin II has a role in the assembly of the contractile ring via severing actin filaments. Involved in the maintenance of the contractile ring once formed. In association with profilin and capping protein, has a role in the mitotic reorganization of the actin cytoskeleton. In effect, yeast cofilin increases the rate of actin polymerization by making new ends available for actin subunit addition. Such a protein complex is important for the polarized growth of yeast cells. This chain is Cofilin (COF1), found in Saccharomyces cerevisiae (strain ATCC 204508 / S288c) (Baker's yeast).